We begin with the raw amino-acid sequence, 520 residues long: Macrophage receptor MARCO (520 aa).

The Cytoplasmic segment spans residues 1-43; the sequence is MRNKKILKEDELLSETQQAAFHQIAMEPFEINVPKPKRRNGVN. Residues 44–64 form a helical; Signal-anchor for type II membrane protein membrane-spanning segment; that stretch reads FSLAVVVIYLILLTAGAGLLV. The Extracellular portion of the chain corresponds to 65-520; sequence VQVLNLQARL…EEDAGVECSV (456 aa). 2 N-linked (GlcNAc...) asparagine glycosylation sites follow: asparagine 83 and asparagine 136. The interval 142–423 is disordered; sequence GMFRIKGEQG…KGERGENSVS (282 aa). Positions 147–419 constitute a Collagen-like domain; that stretch reads KGEQGAPGLQ…VKGEKGERGE (273 aa). Composition is skewed to low complexity over residues 203 to 227, 290 to 345, and 380 to 398; these read EAGL…PQGE, LAGF…PGAT, and SPGL…QKGD. Basic and acidic residues predominate over residues 410 to 419; the sequence is VKGEKGERGE. In terms of domain architecture, SRCR spans 424–519; the sequence is VRIVGSSNRG…HEEDAGVECS (96 aa). 3 cysteine pairs are disulfide-bonded: cysteine 447/cysteine 508, cysteine 460/cysteine 518, and cysteine 488/cysteine 498.

Homotrimer; disulfide-linked. Trimers may assemble in larger oligomers thus resulting in the creation of a large surface capable of interacting with very large ligands. In terms of processing, N-glycosylated. As to expression, expressed in alveolar macrophages (at protein level). Detected in macrophages from various tissues including thymus, kidney, Kupffer cells of liver, and spleen.

The protein localises to the cell membrane. Pattern recognition receptor (PRR) which binds Gram-positive and Gram-negative bacteria. Also plays a role in binding of unopsonized particles by alveolar macrophages. Binds to the secretoglobin SCGB3A2. This chain is Macrophage receptor MARCO (MARCO), found in Homo sapiens (Human).